We begin with the raw amino-acid sequence, 352 residues long: Protein MGF 360-16R (352 aa).

The protein belongs to the asfivirus MGF 360 family.

Functionally, plays a role in virus cell tropism, and may be required for efficient virus replication in macrophages. In African swine fever virus (isolate Tick/South Africa/Pretoriuskop Pr4/1996) (ASFV), this protein is Protein MGF 360-16R.